Consider the following 177-residue polypeptide: Large ribosomal subunit protein uL6 (177 aa).

Belongs to the universal ribosomal protein uL6 family. In terms of assembly, part of the 50S ribosomal subunit.

Its function is as follows. This protein binds to the 23S rRNA, and is important in its secondary structure. It is located near the subunit interface in the base of the L7/L12 stalk, and near the tRNA binding site of the peptidyltransferase center. The sequence is that of Large ribosomal subunit protein uL6 from Pseudomonas fluorescens (strain ATCC BAA-477 / NRRL B-23932 / Pf-5).